The primary structure comprises 610 residues: Dapper homolog 3 (610 aa).

Residue serine 6 is modified to Phosphoserine. 3 disordered regions span residues 50–76 (PGMG…RRAA), 102–179 (LESG…SVGA), and 200–579 (TCSS…PAGP). Over residues 56-69 (EAEDEEDAEEDEDA) the composition is skewed to acidic residues. Positions 63–87 (AEEDEDAAAARRAAAALEEQLEALP) form a coiled coil. Residues 120–138 (DPSSTGGPDSPPSTFCGDS) show a composition bias toward low complexity. A phosphoserine mark is found at serine 165 and serine 237. Residue arginine 255 is modified to Omega-N-methylarginine. Over residues 317–331 (PPEPAPPAAASPPSS) the composition is skewed to pro residues. Low complexity predominate over residues 344-356 (PGAPAASRGLPGR). A phosphoserine mark is found at serine 409 and serine 456. Residues 475–485 (PRGPAPSPSAP) show a composition bias toward pro residues. The span at 524–545 (ESESSASEGESPAFSSASSDSD) shows a compositional bias: low complexity. The span at 566–576 (GPGGAAGGGTP) shows a compositional bias: gly residues. The PDZ-binding signature appears at 607-610 (MTTV).

This sequence belongs to the dapper family. As to quaternary structure, can form homodimers and heterodimers with DACT1 or DACT3. Interacts with CSNK1D, PKA catalytic subunit, PKC-type kinase, DVL1, DVL2, DVL3, VANGL1, VANGL2 and CTNND1. As to expression, expressed in brain and uterus.

In terms of biological role, may be involved in regulation of intracellular signaling pathways during development. Specifically thought to play a role in canonical and/or non-canonical Wnt signaling pathways through interaction with DSH (Dishevelled) family proteins. The sequence is that of Dapper homolog 3 (Dact3) from Mus musculus (Mouse).